Consider the following 356-residue polypeptide: Cytochrome c oxidase subunit 2 (356 aa).

Positions Met-1–Gly-23 are cleaved as a signal peptide. The tract at residues Cys-24–Asp-259 is cytochrome c oxidase subunit II. The next 2 membrane-spanning stretches (helical) occupy residues Leu-45–Val-65 and Ile-93–Thr-113. 4 residues coordinate Cu cation: His-178, Cys-219, Cys-223, and His-227. Residues Pro-260–Glu-356 form the Cytochrome c domain. Cys-273, Cys-276, His-277, and Met-331 together coordinate heme c.

It belongs to the cytochrome c oxidase subunit 2 family. The cofactor is Cu cation. It depends on heme c as a cofactor.

It localises to the cell membrane. It carries out the reaction 4 Fe(II)-[cytochrome c] + O2 + 8 H(+)(in) = 4 Fe(III)-[cytochrome c] + 2 H2O + 4 H(+)(out). Subunits I and II form the functional core of the enzyme complex. Electrons originating in cytochrome c are transferred via heme a and Cu(A) to the binuclear center formed by heme a3 and Cu(B). This chain is Cytochrome c oxidase subunit 2 (ctaC), found in Bacillus sp. (strain PS3).